The chain runs to 55 residues: ATP synthase protein 8 (55 aa).

A helical membrane pass occupies residues 7-24 (NPWFFIMIISWLTYSMII). The disordered stretch occupies residues 34–55 (TNPPARKEPTTNTTTPWNWPWT). The span at 43–55 (TTNTTTPWNWPWT) shows a compositional bias: low complexity.

Belongs to the ATPase protein 8 family. F-type ATPases have 2 components, CF(1) - the catalytic core - and CF(0) - the membrane proton channel.

It localises to the mitochondrion membrane. In terms of biological role, mitochondrial membrane ATP synthase (F(1)F(0) ATP synthase or Complex V) produces ATP from ADP in the presence of a proton gradient across the membrane which is generated by electron transport complexes of the respiratory chain. F-type ATPases consist of two structural domains, F(1) - containing the extramembraneous catalytic core and F(0) - containing the membrane proton channel, linked together by a central stalk and a peripheral stalk. During catalysis, ATP synthesis in the catalytic domain of F(1) is coupled via a rotary mechanism of the central stalk subunits to proton translocation. Part of the complex F(0) domain. Minor subunit located with subunit a in the membrane. The chain is ATP synthase protein 8 (MT-ATP8) from Vireo altiloquus (Black-whiskered vireo).